We begin with the raw amino-acid sequence, 420 residues long: Histidine--tRNA ligase (420 aa).

Belongs to the class-II aminoacyl-tRNA synthetase family. In terms of assembly, homodimer.

Its subcellular location is the cytoplasm. It carries out the reaction tRNA(His) + L-histidine + ATP = L-histidyl-tRNA(His) + AMP + diphosphate + H(+). In Nitrosomonas europaea (strain ATCC 19718 / CIP 103999 / KCTC 2705 / NBRC 14298), this protein is Histidine--tRNA ligase.